The primary structure comprises 265 residues: tRNA pseudouridine synthase A (265 aa).

Residue D58 is the Nucleophile of the active site. Y116 contributes to the substrate binding site.

The protein belongs to the tRNA pseudouridine synthase TruA family. Homodimer.

The enzyme catalyses uridine(38/39/40) in tRNA = pseudouridine(38/39/40) in tRNA. In terms of biological role, formation of pseudouridine at positions 38, 39 and 40 in the anticodon stem and loop of transfer RNAs. The protein is tRNA pseudouridine synthase A of Neisseria meningitidis serogroup C / serotype 2a (strain ATCC 700532 / DSM 15464 / FAM18).